The primary structure comprises 119 residues: Large ribosomal subunit protein uL22 (119 aa).

The protein belongs to the universal ribosomal protein uL22 family. Part of the 50S ribosomal subunit.

This protein binds specifically to 23S rRNA; its binding is stimulated by other ribosomal proteins, e.g. L4, L17, and L20. It is important during the early stages of 50S assembly. It makes multiple contacts with different domains of the 23S rRNA in the assembled 50S subunit and ribosome. Functionally, the globular domain of the protein is located near the polypeptide exit tunnel on the outside of the subunit, while an extended beta-hairpin is found that lines the wall of the exit tunnel in the center of the 70S ribosome. The protein is Large ribosomal subunit protein uL22 of Rickettsia prowazekii (strain Madrid E).